We begin with the raw amino-acid sequence, 213 residues long: MSDQSCIIIAIAGASASGKSLIASTIHEELCNELGCEEIGIVTEDSYYKDQTHLSFEERIKTNYDHPNSMDRDLLIQHLCDLKKGKAVDIPVYSYVEHTRTQEVTRFEPKKVIILEGILLLTDERIRQEVNMSVFVDTPLDICFIRRLQRDMEERGRSLQSVIDQYKSTVRPMFLQFIEPSKQYADIVVPRGGKNRVAINMLKVQIQHLLNNK.

ATP is bound at residue 13 to 20 (GASASGKS).

It belongs to the uridine kinase family.

The protein localises to the cytoplasm. It catalyses the reaction uridine + ATP = UMP + ADP + H(+). The enzyme catalyses cytidine + ATP = CMP + ADP + H(+). It functions in the pathway pyrimidine metabolism; CTP biosynthesis via salvage pathway; CTP from cytidine: step 1/3. Its pathway is pyrimidine metabolism; UMP biosynthesis via salvage pathway; UMP from uridine: step 1/1. The polypeptide is Uridine kinase (Histophilus somni (strain 129Pt) (Haemophilus somnus)).